The primary structure comprises 896 residues: Cytokine receptor common subunit beta (896 aa).

The first 22 residues, 1–22 (MDQQMALTWGLCYMALVALCWG), serve as a signal peptide directing secretion. Topologically, residues 23-441 (HGVTEAEETV…SEEYTWKTDW (419 aa)) are extracellular. Cys39 and Cys49 are joined by a disulfide. Asn62 carries an N-linked (GlcNAc...) asparagine glycan. Disulfide bonds link Cys77-Cys99 and Cys88-Cys94. The Fibronectin type-III 1 domain maps to 136 to 243 (PPLPKNVSIS…PEVHWDSQPG (108 aa)). The N-linked (GlcNAc...) asparagine glycan is linked to Asn141. Residues 220–233 (SPGSSLSGRPSRWS) are compositionally biased toward low complexity. The disordered stretch occupies residues 220–243 (SPGSSLSGRPSRWSPEVHWDSQPG). 2 disulfide bridges follow: Cys253/Cys263 and Cys292/Cys310. Positions 343-439 (QMEPPTLNLT…KWSEEYTWKT (97 aa)) constitute a Fibronectin type-III 2 domain. Residue Asn350 is glycosylated (N-linked (GlcNAc...) asparagine). Positions 428–432 (WSKWS) match the WSXWS motif motif. Residues 442-463 (VMPTLWIVLILVFLILTLLLIL) traverse the membrane as a helical segment. The Cytoplasmic portion of the chain corresponds to 464–896 (RFGCVSVYRT…WDNSQSGKVC (433 aa)). A Box 1 motif motif is present at residues 477-485 (WKEKIPNPS). 2 disordered regions span residues 543–620 (EDPN…GGSL) and 658–725 (CGSS…TGPL). Composition is skewed to polar residues over residues 555–571 (PDTTPAASSESTEQLPN) and 658–668 (CGSSLETSGSP). Low complexity predominate over residues 716 to 725 (PVLTLPTGPL). Phosphoserine is present on residues Ser752 and Ser754. Tyr765 is modified (phosphotyrosine). The disordered stretch occupies residues 771–810 (SVSQAAKSPPGHPAPPVASSPTVIPGEPREEVGPASPHPE).

The protein belongs to the type I cytokine receptor family. Type 4 subfamily. As to quaternary structure, heterodimer of an alpha and a beta subunit. The beta subunit is common to the IL3, IL5 and GM-CSF receptors. The signaling GM-CSF receptor complex is a dodecamer of two head-to-head hexamers of two alpha, two beta, and two ligand subunits. Interacts with TMEM102; this interaction occurs preferentially in the absence of CSF2. Interacts with FCER1G; this interaction is direct. Interacts with LYN. In terms of processing, may be phosphorylated by LYN.

It is found in the membrane. Functionally, high affinity receptor for interleukin-3, interleukin-5 and granulocyte-macrophage colony-stimulating factor. This Mus musculus (Mouse) protein is Cytokine receptor common subunit beta (Csf2rb).